We begin with the raw amino-acid sequence, 401 residues long: Tryptophan synthase beta chain (401 aa).

Lys-91 is modified (N6-(pyridoxal phosphate)lysine).

It belongs to the TrpB family. In terms of assembly, tetramer of two alpha and two beta chains. Pyridoxal 5'-phosphate is required as a cofactor.

It catalyses the reaction (1S,2R)-1-C-(indol-3-yl)glycerol 3-phosphate + L-serine = D-glyceraldehyde 3-phosphate + L-tryptophan + H2O. It participates in amino-acid biosynthesis; L-tryptophan biosynthesis; L-tryptophan from chorismate: step 5/5. In terms of biological role, the beta subunit is responsible for the synthesis of L-tryptophan from indole and L-serine. The protein is Tryptophan synthase beta chain of Lactococcus lactis subsp. cremoris (strain MG1363).